The chain runs to 260 residues: Proteasome subunit alpha type-1 (260 aa).

The interval 231-260 (FLEGLEERPQRKPALPADEPAEKAEEPMEH) is disordered. A compositionally biased stretch (basic and acidic residues) spans 250-260 (PAEKAEEPMEH).

Belongs to the peptidase T1A family. The 26S proteasome consists of a 20S proteasome core and two 19S regulatory subunits. The 20S proteasome core is a barrel-shaped complex made of 28 subunits that are arranged in four stacked rings. The two outer rings are each formed by seven alpha subunits, and the two inner rings are formed by seven beta subunits. The proteolytic activity is exerted by three beta-subunits PSMB5, PSMB6 and PSMB7.

The protein localises to the cytoplasm. Its subcellular location is the nucleus. Its function is as follows. Component of the 20S core proteasome complex involved in the proteolytic degradation of most intracellular proteins. This complex plays numerous essential roles within the cell by associating with different regulatory particles. Associated with two 19S regulatory particles, forms the 26S proteasome and thus participates in the ATP-dependent degradation of ubiquitinated proteins. The 26S proteasome plays a key role in the maintenance of protein homeostasis by removing misfolded or damaged proteins that could impair cellular functions, and by removing proteins whose functions are no longer required. Associated with the PA200 or PA28, the 20S proteasome mediates ubiquitin-independent protein degradation. This type of proteolysis is required in several pathways including spermatogenesis (20S-PA200 complex) or generation of a subset of MHC class I-presented antigenic peptides (20S-PA28 complex). The sequence is that of Proteasome subunit alpha type-1 (PSMA1) from Gallus gallus (Chicken).